The chain runs to 174 residues: Guided entry of tail-anchored proteins factor 1 (174 aa).

The Lumenal segment spans residues 1 to 8 (MSASETDR). The chain crosses the membrane as a helical span at residues 9-29 (WAWLLVLSFVFGCNLLRILLP). Residues 30 to 99 (SLSSFISRVL…VKARTAQLAK (70 aa)) are Cytoplasmic-facing. The stretch at 39 to 94 (LQKDAEQESQMRAEIQGMKQELSTVNMMDEFARYARLERKINKMTDKLKTHVKART) forms a coiled coil. Positions 39 to 97 (LQKDAEQESQMRAEIQGMKQELSTVNMMDEFARYARLERKINKMTDKLKTHVKARTAQL) are interaction with GET3/TRC40. Residues 100 to 120 (IKWFISVAFYILQAALMISLI) traverse the membrane as a helical segment. Topologically, residues 121–148 (WKYYSVPVAVVPSKWITPLDRLVAFPTR) are lumenal. The chain crosses the membrane as a helical span at residues 149–169 (VAGGIGITCWILVCNKVVAIV). Residues 170 to 174 (LHPFS) lie on the Cytoplasmic side of the membrane.

It belongs to the WRB/GET1 family. Component of the Golgi to ER traffic (GET) complex, which is composed of GET1, CAMLG/GET2 and GET3. Within the complex, GET1 and CAMLG form a heterotetramer which is stabilized by phosphatidylinositol binding and which binds to the GET3 homodimer. Interacts with CAMLG/GET2 (via C-terminus). GET3 shows a higher affinity for CAMLG than for GET1.

It is found in the endoplasmic reticulum membrane. Required for the post-translational delivery of tail-anchored (TA) proteins to the endoplasmic reticulum. Together with CAMLG/GET2, acts as a membrane receptor for soluble GET3/TRC40, which recognizes and selectively binds the transmembrane domain of TA proteins in the cytosol. Required to ensure correct topology and ER insertion of CAMLG. The protein is Guided entry of tail-anchored proteins factor 1 of Mus musculus (Mouse).